The sequence spans 413 residues: Phosphatidylcholine-sterol acyltransferase (413 aa).

The N-terminal stretch at 1-22 (GRTGAGFTLLTLLLLLPQPTSQ) is a signal peptide. The cysteines at positions 72 and 96 are disulfide-linked. N-linked (GlcNAc...) asparagine glycosylation occurs at N106. The Charge relay system role is filled by S203. Catalysis depends on S203, which acts as the Nucleophile. Residue N294 is glycosylated (N-linked (GlcNAc...) asparagine). A disulfide bridge links C335 with C378. Residues D367 and H399 each act as charge relay system in the active site. N406 carries N-linked (GlcNAc...) asparagine glycosylation.

Belongs to the AB hydrolase superfamily. Lipase family. As to expression, detected in blood plasma (at protein level). Expressed in liver, brain and adrenal glands. Lower expression in testes. In laying hens, expressed higher in brain than in liver. In roosters, higher levels in liver than in brain.

The protein localises to the secreted. The enzyme catalyses a sterol + a 1,2-diacyl-sn-glycero-3-phosphocholine = a sterol ester + a 1-acyl-sn-glycero-3-phosphocholine. With respect to regulation, APOA1 is the most potent activator in plasma. Also activated by APOE, APOC1 and APOA4. Functionally, central enzyme in the extracellular metabolism of plasma lipoproteins. Synthesized mainly in the liver and secreted into plasma where it converts cholesterol and phosphatidylcholines (lecithins) to cholesteryl esters and lysophosphatidylcholines on the surface of high and low density lipoproteins (HDLs and LDLs). The cholesterol ester is then transported back to the liver. Also produced in the brain by primary astrocytes, and esterifies free cholesterol on nascent APOE-containing lipoproteins secreted from glia and influences cerebral spinal fluid (CSF) APOE- and APOA1 levels. Together with APOE and the cholesterol transporter ABCA1, plays a key role in the maturation of glial-derived, nascent lipoproteins. Required for remodeling high-density lipoprotein particles into their spherical forms. Has a preference for plasma 16:0-18:2 or 18:O-18:2 phosphatidylcholines. This chain is Phosphatidylcholine-sterol acyltransferase (LCAT), found in Gallus gallus (Chicken).